Reading from the N-terminus, the 518-residue chain is Chromosomal replication initiator protein DnaA (518 aa).

Positions 1–72 are domain I, interacts with DnaA modulators; it reads MTLAEFWPLC…VREELAAGRS (72 aa). The tract at residues 72 to 180 is domain II; the sequence is SAFVFKPGEG…DAEEARYEQT (109 aa). Residues 181 to 397 form a domain III, AAA+ region region; it reads NLSPDYTFDT…GAFNRVGASS (217 aa). ATP-binding residues include glycine 225, glycine 227, lysine 228, and threonine 229. The segment at 398–518 is domain IV, binds dsDNA; the sequence is RFMNRPVIDI…YEKLLILIQN (121 aa).

This sequence belongs to the DnaA family. As to quaternary structure, oligomerizes as a right-handed, spiral filament on DNA at oriC.

Its subcellular location is the cytoplasm. Its function is as follows. Plays an essential role in the initiation and regulation of chromosomal replication. ATP-DnaA binds to the origin of replication (oriC) to initiate formation of the DNA replication initiation complex once per cell cycle. Binds the DnaA box (a 9 base pair repeat at the origin) and separates the double-stranded (ds)DNA. Forms a right-handed helical filament on oriC DNA; dsDNA binds to the exterior of the filament while single-stranded (ss)DNA is stabiized in the filament's interior. The ATP-DnaA-oriC complex binds and stabilizes one strand of the AT-rich DNA unwinding element (DUE), permitting loading of DNA polymerase. After initiation quickly degrades to an ADP-DnaA complex that is not apt for DNA replication. Binds acidic phospholipids. In Neisseria meningitidis serogroup C / serotype 2a (strain ATCC 700532 / DSM 15464 / FAM18), this protein is Chromosomal replication initiator protein DnaA.